A 146-amino-acid polypeptide reads, in one-letter code: Ribosome maturation factor RimP (146 aa).

This sequence belongs to the RimP family.

It is found in the cytoplasm. Functionally, required for maturation of 30S ribosomal subunits. This Helicobacter pylori (strain P12) protein is Ribosome maturation factor RimP.